Reading from the N-terminus, the 765-residue chain is Palmitoyltransferase ZDHHC8 (765 aa).

Residues M1–K13 are Cytoplasmic-facing. A helical transmembrane segment spans residues Y14–F34. Topologically, residues T35–G52 are lumenal. Residues I53–F73 traverse the membrane as a helical segment. The Cytoplasmic segment spans residues P74–Y148. A DHHC domain is found at K104–L154. The active-site S-palmitoyl cysteine intermediate is C134. A helical membrane pass occupies residues F149–V169. Residues Y170–M190 lie on the Lumenal side of the membrane. The helical transmembrane segment at C191–V211 threads the bilayer. The Cytoplasmic segment spans residues T212–V765. A disordered region spans residues L290–E386. The segment covering G301–L311 has biased composition (basic and acidic residues). The span at P333–S348 shows a compositional bias: polar residues. S337 carries the phosphoserine modification. At R441 the chain carries Omega-N-methylarginine. Residues A447–D542 form a disordered region. Phosphoserine is present on residues S606 and S627. The disordered stretch occupies residues S630–H747. The span at P639–A655 shows a compositional bias: polar residues. Over residues Q671–P680 the composition is skewed to pro residues. Phosphoserine is present on residues S675, S682, S725, and S743.

The protein belongs to the DHHC palmitoyltransferase family. ERF2/ZDHHC9 subfamily.

Its subcellular location is the golgi apparatus membrane. It localises to the mitochondrion membrane. The enzyme catalyses L-cysteinyl-[protein] + hexadecanoyl-CoA = S-hexadecanoyl-L-cysteinyl-[protein] + CoA. Palmitoyltransferase that catalyzes the addition of palmitate onto various protein substrates and therefore functions in several unrelated biological processes. Through the palmitoylation of ABCA1 regulates the localization of the transporter to the plasma membrane and thereby regulates its function in cholesterol and phospholipid efflux. Could also pamitoylate the D(2) dopamine receptor DRD2 and regulate its stability and localization to the plasma membrane. Could also play a role in glutamatergic transmission. This chain is Palmitoyltransferase ZDHHC8, found in Canis lupus familiaris (Dog).